The following is a 214-amino-acid chain: Cytochrome b (214 aa).

4 helical membrane-spanning segments follow: residues 31–51, 75–96, 111–131, and 176–196; these read FGSM…FLAI, WIMQ…YIHI, WLSG…GYVL, and FFAL…LHIL. Residues histidine 81 and histidine 95 each coordinate heme b. Histidine 180 and histidine 194 together coordinate heme b. Histidine 199 provides a ligand contact to a ubiquinone.

This sequence belongs to the cytochrome b family. In terms of assembly, the cytochrome bc1 complex contains 3 respiratory subunits (MT-CYB, CYC1 and UQCRFS1), 2 core proteins (UQCRC1 and UQCRC2) and probably 6 low-molecular weight proteins. Heme b serves as cofactor.

The protein localises to the mitochondrion inner membrane. Component of the ubiquinol-cytochrome c reductase complex (complex III or cytochrome b-c1 complex) that is part of the mitochondrial respiratory chain. The b-c1 complex mediates electron transfer from ubiquinol to cytochrome c. Contributes to the generation of a proton gradient across the mitochondrial membrane that is then used for ATP synthesis. The chain is Cytochrome b (MT-CYB) from Crotalus atrox (Western diamondback rattlesnake).